The chain runs to 285 residues: RNA 5'-monophosphate methyltransferase (285 aa).

The tract at residues 1–28 is disordered; the sequence is MAATQELSKGGVEEAVEEDDPAALKPGA. S-adenosyl-L-methionine contacts are provided by residues Arg46, Asn77, Asp111, 136–137, and Met165; that span reads DI. A Bin3-type SAM domain is found at 53–275; that stretch reads ELLRQLFPPE…KHTEETQAIP (223 aa).

This sequence belongs to the methyltransferase superfamily. In terms of assembly, interacts with DICER1; the interaction may be mediated by RNA.

The protein localises to the cytoplasm. The enzyme catalyses a 5'-end 5'-phospho-ribonucleoside-RNA + S-adenosyl-L-methionine = a 5'-end (5'-methylphospho)-ribonucleoside-RNA + S-adenosyl-L-homocysteine. It carries out the reaction a 5'-end 5'-phospho-ribonucleoside-RNA + 2 S-adenosyl-L-methionine = a 5'-end (5'-bismethylphospho)-ribonucleoside-RNA + 2 S-adenosyl-L-homocysteine. Its function is as follows. O-methyltransferase that specifically monomethylates 5'-monophosphate of cytoplasmic histidyl tRNA (tRNA(His)), acting as a capping enzyme by protecting tRNA(His) from cleavage by DICER1. Also able, with less efficiently, to methylate the 5' monophosphate of a subset of pre-miRNAs, acting as a negative regulator of miRNA processing. The 5' monophosphate of pre-miRNAs is recognized by DICER1 and is required for pre-miRNAs processing: methylation at this position reduces the processing of pre-miRNAs by DICER1. Was also reported to mediate dimethylation of pre-miR-145; however dimethylation cannot be reproduced by another group which observes a monomethylation of pre-miR-145. The sequence is that of RNA 5'-monophosphate methyltransferase from Rattus norvegicus (Rat).